A 2664-amino-acid chain; its full sequence is Inositol 1,4,5-trisphosphate-gated calcium channel ITPR3 (2664 aa).

The Cytoplasmic segment spans residues 1–2227 (MSEMSSFLHI…YVEGASTGVL (2227 aa)). MIR domains lie at 113–173 (GDVV…LRSN), 174–224 (GDNV…INLF), 232–288 (EEVL…VEVV), 295–372 (GGAG…LDPT), and 378–434 (DSFV…IVSV). R266, T268, L269, and R270 together coordinate 1D-myo-inositol 1,4,5-trisphosphate. A disordered region spans residues 320-344 (NPSYKGDASDPKAAGTGAQGRTGRR). 1D-myo-inositol 1,4,5-trisphosphate-binding residues include R503, K507, R510, Y567, R568, and K569. R743 serves as a coordination point for Ca(2+). Phosphoserine occurs at positions 909 and 927. The Ca(2+) site is built by E1115 and E1118. 2 disordered regions span residues 1124–1158 (KGAS…GEKS) and 1790–1850 (QQET…VGER). The segment covering 1792-1805 (ETKSTVAVNMSDLG) has biased composition (polar residues). S1806, S1825, and S1827 each carry phosphoserine. 2 residues coordinate Ca(2+): E1875 and E1939. A1989, E2142, and K2145 together coordinate ATP. The chain crosses the membrane as a helical span at residues 2228-2248 (GSPLISLLFWILICFSIAALF). Residues 2249–2256 (TKRYSVRP) lie on the Extracellular side of the membrane. The helical transmembrane segment at 2257 to 2277 (LIVALILRSIYYLGIGPTLNI) threads the bilayer. The Cytoplasmic segment spans residues 2278 to 2286 (LGALNLTNK). The helical transmembrane segment at 2287 to 2304 (IVFVVSFVGNRGTFIRGY) threads the bilayer. Residues 2305 to 2318 (KAMVMDMEFLYHVG) lie on the Extracellular side of the membrane. A helical transmembrane segment spans residues 2319–2339 (YILTSVLGLFAHELFYSILLF). The Cytoplasmic segment spans residues 2340 to 2361 (DLIYREETLFNVIKSVTRNGRS). A helical transmembrane segment spans residues 2362 to 2382 (ILLTALLALILVYLFSIVGFL). Over 2383-2489 (FLKDDFILEV…ESLFPARVVY (107 aa)) the chain is Extracellular. C2448 and C2454 form a disulfide bridge. Residues 2490-2510 (DLLFFFIVIIIVLNLIFGVII) traverse the membrane as a helical segment. At 2511 to 2664 (DTFADLRSEK…FVDVQNCMSR (154 aa)) the chain is on the cytoplasmic side. ATP-binding residues include C2531 and F2532. C2531 serves as a coordination point for Zn(2+). Zn(2+) is bound by residues C2534 and H2551. Residues K2553, H2556, N2557, and M2558 each contribute to the ATP site. H2556 lines the Zn(2+) pocket. T2574 contacts Ca(2+). 2 positions are modified to phosphoserine: S2602 and S2663.

This sequence belongs to the InsP3 receptor family. In terms of assembly, homotetramer. Homodimer. Interacts with TRPC1, TRPC3 and TRPC4. Interacts with TRPV4. Interacts with SIGMAR1. Interacts with PML and AKT1. Interacts with IRAG2 (via coiled-coil domain). Interacts with CABP1. Interacts with TMBIM4/LFG4. Interacts with CEMIP. Interacts with TESPA1. Interacts with TMEM203. Interacts with BOK; regulates ITPR3 expression. Interacts with BCL2L10. Interacts with CHGA and CHGB. In terms of processing, phosphorylated by AKT1 on serine and/or threonine residues.

The protein localises to the endoplasmic reticulum membrane. It localises to the cytoplasmic vesicle. The protein resides in the secretory vesicle membrane. The enzyme catalyses Ca(2+)(in) = Ca(2+)(out). Its activity is regulated as follows. Inositol 1,4,5-trisphosphate-gated calcium channel is regulated by cytosolic calcium in a biphasic manner. At low concentrations, cytosolic calcium binds at a high-affinity juxtamembrane domain (JD) calcium binding site, allowing ITPR3 to activate by escaping a low-energy resting state through an ensemble of preactivated states. At high cytosolic calcium concentrations, ITPR3 preferentially enters an inhibited state stabilized by calcium binding at a second, low-affinity cytoplasmic domain (CD) calcium binding site. Its function is as follows. Inositol 1,4,5-trisphosphate-gated calcium channel that, upon 1D-myo-inositol 1,4,5-trisphosphate binding, transports calcium from the endoplasmic reticulum lumen to cytoplasm, thus releasing the intracellular calcium and therefore participates in cellular calcium ion homeostasis. 1D-myo-inositol 1,4,5-trisphosphate binds to the ligand-free channel without altering its global conformation, yielding the low-energy resting state, then progresses through resting-to preactivated transitions to the higher energy preactivated state, which increases affinity for calcium, promoting binding of the low basal cytosolic calcium at the juxtamembrane domain (JD) site, favoring the transition through the ensemble of high-energy intermediate states along the trajectory to the fully-open activated state. Upon opening, releases calcium in the cytosol where it can bind to the low-affinity cytoplasmic domain (CD) site and stabilizes the inhibited state to terminate calcium release. This chain is Inositol 1,4,5-trisphosphate-gated calcium channel ITPR3, found in Bos taurus (Bovine).